We begin with the raw amino-acid sequence, 1338 residues long: Vascular endothelial growth factor receptor 1 (1338 aa).

Residues M1–G26 form the signal peptide. The Extracellular segment spans residues S27–E758. Ig-like C2-type domains are found at residues P32–A123, G151–H214, I230–H327, T335–T421, P428–T553, P556–T654, and P661–T747. Cystine bridges form between C53/C107 and C158/C207. Residues N100, N164, N196, and N251 are each glycosylated (N-linked (GlcNAc...) asparagine). Residues C252 and C311 are joined by a disulfide bond. N-linked (GlcNAc...) asparagine glycosylation is found at N323, N402, N417, N474, N547, N597, N620, N625, and N666. C454 and C535 are disulfide-bonded. Residues C577 and C636 are joined by a disulfide bond. A disulfide bridge links C682 with C731. A helical transmembrane segment spans residues L759–I780. Over R781 to I1338 the chain is Cytoplasmic. In terms of domain architecture, Protein kinase spans L827 to L1158. ATP is bound by residues L833–V841 and K861. Y914 carries the phosphotyrosine; by autocatalysis modification. Over residues P940–L957 the composition is skewed to basic and acidic residues. Positions P940–E982 are disordered. Positions S959 to F971 are enriched in polar residues. The active-site Proton acceptor is D1022. 7 positions are modified to phosphotyrosine; by autocatalysis: Y1053, Y1169, Y1213, Y1242, Y1309, Y1327, and Y1333.

The protein belongs to the protein kinase superfamily. Tyr protein kinase family. CSF-1/PDGF receptor subfamily. As to quaternary structure, interacts with VEGFA, VEGFB and PGF. Monomer in the absence of bound VEGFA, VEGFB or PGF. Homodimer in the presence of bound VEGFA, VEGFB and PGF. Can also form a heterodimer with KDR. Interacts (when tyrosine phosphorylated) with CBL, CRK, GRB2, NCK1, PIK3R1, PLCG, PSEN1 and PTPN11. Probably also interacts with PTPRB. Interacts with RACK1. Identified in a complex with CBL and CD2AP. In terms of processing, N-glycosylated. Post-translationally, ubiquitinated after VEGFA-mediated autophosphorylation, leading to proteolytic degradation. Autophosphorylated on tyrosine residues upon ligand binding. Autophosphorylation occurs in trans, i.e. one subunit of the dimeric receptor phosphorylates tyrosine residues on the other subunit. Phosphorylation at Tyr-1169 is important for interaction with PLCG. Phosphorylation at Tyr-1213 is important for interaction with PIK3R1, PTPN11, GRB2, and PLCG. Phosphorylation at Tyr-1333 is important for endocytosis and for interaction with CBL, NCK1 and CRK. Is probably dephosphorylated by PTPRB. As to expression, detected in normal lung, but also in placenta, liver, kidney, heart and brain tissues. Specifically expressed in most of the vascular endothelial cells, and also expressed in peripheral blood monocytes. Isoform 2 is strongly expressed in placenta. Isoform 3 is expressed in corneal epithelial cells (at protein level). Isoform 3 is expressed in vascular smooth muscle cells (VSMC).

The protein resides in the cell membrane. Its subcellular location is the endosome. The protein localises to the secreted. It is found in the cytoplasm. The enzyme catalyses L-tyrosyl-[protein] + ATP = O-phospho-L-tyrosyl-[protein] + ADP + H(+). Present in an inactive conformation in the absence of bound ligand. Binding of VEGFA, VEGFB or PGF leads to dimerization and activation by autophosphorylation on tyrosine residues. In terms of biological role, tyrosine-protein kinase that acts as a cell-surface receptor for VEGFA, VEGFB and PGF, and plays an essential role in the development of embryonic vasculature, the regulation of angiogenesis, cell survival, cell migration, macrophage function, chemotaxis, and cancer cell invasion. Acts as a positive regulator of postnatal retinal hyaloid vessel regression. May play an essential role as a negative regulator of embryonic angiogenesis by inhibiting excessive proliferation of endothelial cells. Can promote endothelial cell proliferation, survival and angiogenesis in adulthood. Its function in promoting cell proliferation seems to be cell-type specific. Promotes PGF-mediated proliferation of endothelial cells, proliferation of some types of cancer cells, but does not promote proliferation of normal fibroblasts (in vitro). Has very high affinity for VEGFA and relatively low protein kinase activity; may function as a negative regulator of VEGFA signaling by limiting the amount of free VEGFA and preventing its binding to KDR. Modulates KDR signaling by forming heterodimers with KDR. Ligand binding leads to the activation of several signaling cascades. Activation of PLCG leads to the production of the cellular signaling molecules diacylglycerol and inositol 1,4,5-trisphosphate and the activation of protein kinase C. Mediates phosphorylation of PIK3R1, the regulatory subunit of phosphatidylinositol 3-kinase, leading to activation of phosphatidylinositol kinase and the downstream signaling pathway. Mediates activation of MAPK1/ERK2, MAPK3/ERK1 and the MAP kinase signaling pathway, as well as of the AKT1 signaling pathway. Phosphorylates SRC and YES1, and may also phosphorylate CBL. Promotes phosphorylation of AKT1 at 'Ser-473'. Promotes phosphorylation of PTK2/FAK1. Phosphorylates PLCG. Functionally, may function as decoy receptor for VEGFA. Its function is as follows. Has a truncated kinase domain; it increases phosphorylation of SRC at 'Tyr-418' by unknown means and promotes tumor cell invasion. This chain is Vascular endothelial growth factor receptor 1 (FLT1), found in Homo sapiens (Human).